The primary structure comprises 392 residues: Tryptophan synthase beta chain 1 (392 aa).

Residue Lys85 is modified to N6-(pyridoxal phosphate)lysine.

The protein belongs to the TrpB family. In terms of assembly, tetramer of two alpha and two beta chains. The cofactor is pyridoxal 5'-phosphate.

It carries out the reaction (1S,2R)-1-C-(indol-3-yl)glycerol 3-phosphate + L-serine = D-glyceraldehyde 3-phosphate + L-tryptophan + H2O. It participates in amino-acid biosynthesis; L-tryptophan biosynthesis; L-tryptophan from chorismate: step 5/5. Its function is as follows. The beta subunit is responsible for the synthesis of L-tryptophan from indole and L-serine. The chain is Tryptophan synthase beta chain 1 (trpB1) from Methanothermobacter thermautotrophicus (strain ATCC 29096 / DSM 1053 / JCM 10044 / NBRC 100330 / Delta H) (Methanobacterium thermoautotrophicum).